Consider the following 1024-residue polypeptide: Carbamoyl phosphate synthase large chain (1024 aa).

A carboxyphosphate synthetic domain region spans residues 1–396 (MDIKKILVIG…AWQKAVRMID (396 aa)). ATP contacts are provided by R125, R165, G171, G172, K204, L206, E211, G237, V238, H239, Q280, and E294. An ATP-grasp 1 domain is found at 129-323 (QKAMREAGIP…LAYIAAKLAL (195 aa)). Residues Q280, E294, and N296 each coordinate Mg(2+). Residues Q280, E294, and N296 each coordinate Mn(2+). Residues 397–536 (IGEPGLVGGP…LTYGGQYDDK (140 aa)) form an oligomerization domain region. Residues 536-917 (KTPGVDYLVV…LKSWLSATPN (382 aa)) form a carbamoyl phosphate synthetic domain region. The ATP-grasp 2 domain occupies 660 to 849 (SKLLDRLGIK…YMSLVADVLT (190 aa)). ATP contacts are provided by R696, K735, E742, G766, V767, H768, S769, Q809, and E820. Q809, E820, and N822 together coordinate Mg(2+). Residues Q809, E820, and N822 each coordinate Mn(2+). The MGS-like domain occupies 917-1024 (NKIPSKTALI…KNGKLEVAPW (108 aa)). Positions 918-1024 (KIPSKTALIY…KNGKLEVAPW (107 aa)) are allosteric domain.

This sequence belongs to the CarB family. As to quaternary structure, composed of two chains; the small (or glutamine) chain promotes the hydrolysis of glutamine to ammonia, which is used by the large (or ammonia) chain to synthesize carbamoyl phosphate. Tetramer of heterodimers (alpha,beta)4. Mg(2+) serves as cofactor. The cofactor is Mn(2+).

The enzyme catalyses hydrogencarbonate + L-glutamine + 2 ATP + H2O = carbamoyl phosphate + L-glutamate + 2 ADP + phosphate + 2 H(+). The catalysed reaction is hydrogencarbonate + NH4(+) + 2 ATP = carbamoyl phosphate + 2 ADP + phosphate + 2 H(+). The protein operates within amino-acid biosynthesis; L-arginine biosynthesis; carbamoyl phosphate from bicarbonate: step 1/1. Its pathway is pyrimidine metabolism; UMP biosynthesis via de novo pathway; (S)-dihydroorotate from bicarbonate: step 1/3. Functionally, large subunit of the glutamine-dependent carbamoyl phosphate synthetase (CPSase). CPSase catalyzes the formation of carbamoyl phosphate from the ammonia moiety of glutamine, carbonate, and phosphate donated by ATP, constituting the first step of 2 biosynthetic pathways, one leading to arginine and/or urea and the other to pyrimidine nucleotides. The large subunit (synthetase) binds the substrates ammonia (free or transferred from glutamine from the small subunit), hydrogencarbonate and ATP and carries out an ATP-coupled ligase reaction, activating hydrogencarbonate by forming carboxy phosphate which reacts with ammonia to form carbamoyl phosphate. This is Carbamoyl phosphate synthase large chain from Pyrobaculum aerophilum (strain ATCC 51768 / DSM 7523 / JCM 9630 / CIP 104966 / NBRC 100827 / IM2).